Reading from the N-terminus, the 243-residue chain is Small ribosomal subunit protein uS3 (243 aa).

A KH type-2 domain is found at 38–106; the sequence is IRKYLNARLA…DIQINIFEVK (69 aa). The interval 217-243 is disordered; that stretch reads TQTKESGRGGNGNNNGGKNFKRKKNNR.

It belongs to the universal ribosomal protein uS3 family. In terms of assembly, part of the 30S ribosomal subunit. Forms a tight complex with proteins S10 and S14.

In terms of biological role, binds the lower part of the 30S subunit head. Binds mRNA in the 70S ribosome, positioning it for translation. The protein is Small ribosomal subunit protein uS3 of Phocaeicola vulgatus (strain ATCC 8482 / DSM 1447 / JCM 5826 / CCUG 4940 / NBRC 14291 / NCTC 11154) (Bacteroides vulgatus).